We begin with the raw amino-acid sequence, 63 residues long: MAATCDVCAKHPSFGYSVSHSHVRTKRRWNPNIQKVRTVVNGTPKRLNVCTSCLKAGKVTRAL.

The protein belongs to the bacterial ribosomal protein bL28 family.

This Beutenbergia cavernae (strain ATCC BAA-8 / DSM 12333 / CCUG 43141 / JCM 11478 / NBRC 16432 / NCIMB 13614 / HKI 0122) protein is Large ribosomal subunit protein bL28.